The sequence spans 87 residues: Small ribosomal subunit protein bS20 (87 aa).

The tract at residues 1–24 is disordered; that stretch reads MANTAQARKRARQSVERNKHNSSL.

Belongs to the bacterial ribosomal protein bS20 family.

Functionally, binds directly to 16S ribosomal RNA. The polypeptide is Small ribosomal subunit protein bS20 (Bordetella avium (strain 197N)).